Here is a 509-residue protein sequence, read N- to C-terminus: Anaerobic nitric oxide reductase transcription regulator NorR (509 aa).

Asp-56 carries the 4-aspartylphosphate modification. Positions 186 to 415 (MIGRSPAMDR…LEHAIHRAAV (230 aa)) constitute a Sigma-54 factor interaction domain. ATP contacts are provided by residues 214–221 (GETGVGKE) and 277–286 (ADKGTLFLDE). The H-T-H motif DNA-binding region spans 484–503 (WAATARALEMDGGNLHRLAR).

It functions in the pathway nitrogen metabolism; nitric oxide reduction. Required for the expression of anaerobic nitric oxide (NO) reductase, acts as a transcriptional activator for at least the norVW operon. Activation also requires sigma-54. The polypeptide is Anaerobic nitric oxide reductase transcription regulator NorR (Aeromonas salmonicida (strain A449)).